The primary structure comprises 68 residues: Conotoxin Mi11.1 (68 aa).

The signal sequence occupies residues 1-26; the sequence is MMLRLTSVSCFLLVIACLNLFQVVLT. Intrachain disulfides connect C29-C43, C36-C48, C42-C52, and C47-C56. Tyrosine amide is present on Y60. Positions 64 to 68 are excised as a propeptide; the sequence is ATFQE.

Belongs to the conotoxin I2 superfamily. In terms of tissue distribution, expressed by the venom duct.

The protein resides in the secreted. This chain is Conotoxin Mi11.1, found in Conus miles (Soldier cone).